The chain runs to 419 residues: Epothilone C/D epoxidase (419 aa).

A180 and G304 together coordinate substrate. Position 365 (C365) interacts with heme.

Belongs to the cytochrome P450 family. Heme is required as a cofactor.

It carries out the reaction epothilone C + 2 reduced [2Fe-2S]-[ferredoxin] + O2 + 2 H(+) = epothilone A + 2 oxidized [2Fe-2S]-[ferredoxin] + H2O. It catalyses the reaction epothilone D + 2 reduced [2Fe-2S]-[ferredoxin] + O2 + 2 H(+) = epothilone B + 2 oxidized [2Fe-2S]-[ferredoxin] + H2O. Its pathway is secondary metabolite biosynthesis; epothilone biosynthesis. Functionally, involved in the biosynthesis of epothilones, macrolactones which have a narrow anti-fungal spectrum and microtubule-stabilizing activity. Catalyzes the epoxidation of epothilones C and D to epothilones A and B, respectively. The protein is Epothilone C/D epoxidase (cyp167A1) of Sorangium cellulosum (Polyangium cellulosum).